Here is a 362-residue protein sequence, read N- to C-terminus: 3-dehydroquinate synthase (362 aa).

Residues 71–76 (DGEQYK), 105–109 (GVVGD), 129–130 (TT), K142, K151, and 169–172 (CLKT) each bind NAD(+). Zn(2+) contacts are provided by E184, H247, and H264.

Belongs to the sugar phosphate cyclases superfamily. Dehydroquinate synthase family. Co(2+) is required as a cofactor. Requires Zn(2+) as cofactor. NAD(+) serves as cofactor.

The protein localises to the cytoplasm. It catalyses the reaction 7-phospho-2-dehydro-3-deoxy-D-arabino-heptonate = 3-dehydroquinate + phosphate. It participates in metabolic intermediate biosynthesis; chorismate biosynthesis; chorismate from D-erythrose 4-phosphate and phosphoenolpyruvate: step 2/7. Catalyzes the conversion of 3-deoxy-D-arabino-heptulosonate 7-phosphate (DAHP) to dehydroquinate (DHQ). This is 3-dehydroquinate synthase from Shigella dysenteriae serotype 1 (strain Sd197).